A 290-amino-acid polypeptide reads, in one-letter code: Outer dense fiber protein 4 (290 aa).

Serine 28 carries the post-translational modification Phosphoserine. 4 consecutive transmembrane segments (helical) span residues 44 to 64 (AQVVASEFSLVAFLLLLVMVF), 125 to 145 (PVFGVAKISFTLAIGLGFVLT), 164 to 184 (LIGIILSFCEVTLIFLTLLLF), and 201 to 221 (IGWSYFIGWLVLILYFTCGIL). A disordered region spans residues 247-290 (GPESLVSPSQTPSSQENSQESPKDDQKPSSPDKVVSPPQPDTTG). The span at 252 to 266 (VSPSQTPSSQENSQE) shows a compositional bias: polar residues.

In terms of tissue distribution, expressed in testis.

It localises to the membrane. Component of the outer dense fibers (ODF) of spermatozoa which could be involved in sperm tail structure, sperm movement and general organization of cellular cytoskeleton. The sequence is that of Outer dense fiber protein 4 (Odf4) from Mus musculus (Mouse).